The sequence spans 399 residues: MAREKFERNKPHVNIGTIGHVDHGKTTLTAAITSVLAKKGQAKVQDYAEIDGAPEERERGITINTAHVEYETDGRHYAHVDCPGHADYVKNMITGAAQMDGAILVCAATDGPMAQTKEHILLAKQVGVPALVVALNKCDMVDDEEIIELVEMEIRELLSSYDFPGDDIPIVQVSGLKAIEGEAEWEAKIDELMEAVDASIPEPEREIEKPFLMAVEDVFSITGRGTVATGRIERGKVKKGEEIEIVGIRDSRKTTVTGVEMFRKDLDEGLAGDNCGLLLRGIEKEDIERGMVLVKPGSITPHTKFEGQVYVLKKEEGGRHTPFFAGYRPQFYIRTTDVTGQITAFTAEDGSNVEMVMPGDNIKMTGELICPVAIEQGMRFAIREGGRTIGAGVVSKIIE.

One can recognise a tr-type G domain in the interval 10-204; the sequence is KPHVNIGTIG…AVDASIPEPE (195 aa). Residues 19 to 26 form a G1 region; the sequence is GHVDHGKT. 19–26 contacts GTP; sequence GHVDHGKT. A Mg(2+)-binding site is contributed by threonine 26. Positions 60–64 are G2; it reads GITIN. The segment at 81–84 is G3; it reads DCPG. GTP is bound by residues 81–85 and 136–139; these read DCPGH and NKCD. The segment at 136-139 is G4; sequence NKCD. Positions 174-176 are G5; sequence SGL.

It belongs to the TRAFAC class translation factor GTPase superfamily. Classic translation factor GTPase family. EF-Tu/EF-1A subfamily. Monomer.

It is found in the cytoplasm. It carries out the reaction GTP + H2O = GDP + phosphate + H(+). GTP hydrolase that promotes the GTP-dependent binding of aminoacyl-tRNA to the A-site of ribosomes during protein biosynthesis. This is Elongation factor Tu from Prochlorococcus marinus (strain MIT 9313).